The following is a 127-amino-acid chain: Aspartate 1-decarboxylase (127 aa).

The active-site Schiff-base intermediate with substrate; via pyruvic acid is the Ser-25. Pyruvic acid (Ser) is present on Ser-25. Residue Thr-57 participates in substrate binding. Tyr-58 (proton donor) is an active-site residue. 73–75 provides a ligand contact to substrate; it reads GAA.

This sequence belongs to the PanD family. In terms of assembly, heterooctamer of four alpha and four beta subunits. Pyruvate is required as a cofactor. Is synthesized initially as an inactive proenzyme, which is activated by self-cleavage at a specific serine bond to produce a beta-subunit with a hydroxyl group at its C-terminus and an alpha-subunit with a pyruvoyl group at its N-terminus.

Its subcellular location is the cytoplasm. It carries out the reaction L-aspartate + H(+) = beta-alanine + CO2. It functions in the pathway cofactor biosynthesis; (R)-pantothenate biosynthesis; beta-alanine from L-aspartate: step 1/1. In terms of biological role, catalyzes the pyruvoyl-dependent decarboxylation of aspartate to produce beta-alanine. This Listeria monocytogenes serotype 4b (strain F2365) protein is Aspartate 1-decarboxylase.